The sequence spans 220 residues: 7-cyano-7-deazaguanine synthase (220 aa).

10-20 (FSGGQDSTTCL) is a binding site for ATP. The Zn(2+) site is built by Cys186, Cys195, Cys198, and Cys201.

This sequence belongs to the QueC family. Homodimer. It depends on Zn(2+) as a cofactor.

It carries out the reaction 7-carboxy-7-deazaguanine + NH4(+) + ATP = 7-cyano-7-deazaguanine + ADP + phosphate + H2O + H(+). The protein operates within purine metabolism; 7-cyano-7-deazaguanine biosynthesis. In terms of biological role, catalyzes the ATP-dependent conversion of 7-carboxy-7-deazaguanine (CDG) to 7-cyano-7-deazaguanine (preQ(0)). This Bacillus anthracis (strain A0248) protein is 7-cyano-7-deazaguanine synthase.